The primary structure comprises 168 residues: Phosphopantetheine adenylyltransferase (168 aa).

Substrate is bound at residue Ser9. Residues 9–10 and His17 contribute to the ATP site; that span reads SF. Substrate-binding residues include Lys41, Leu73, and Arg87. ATP is bound by residues 88 to 90, Glu98, and 123 to 129; these read GMR and WIYTSSS.

It belongs to the bacterial CoaD family. As to quaternary structure, homohexamer. It depends on Mg(2+) as a cofactor.

It localises to the cytoplasm. It catalyses the reaction (R)-4'-phosphopantetheine + ATP + H(+) = 3'-dephospho-CoA + diphosphate. It functions in the pathway cofactor biosynthesis; coenzyme A biosynthesis; CoA from (R)-pantothenate: step 4/5. Reversibly transfers an adenylyl group from ATP to 4'-phosphopantetheine, yielding dephospho-CoA (dPCoA) and pyrophosphate. The protein is Phosphopantetheine adenylyltransferase of Desulfosudis oleivorans (strain DSM 6200 / JCM 39069 / Hxd3) (Desulfococcus oleovorans).